A 44-amino-acid chain; its full sequence is Metallothionein-4 (44 aa).

This sequence belongs to the metallothionein superfamily. Type 5 family.

This protein binds cations of several transition elements. Thought to be involved in metal ion homeostasis. The sequence is that of Metallothionein-4 (MtnD) from Drosophila melanogaster (Fruit fly).